Consider the following 476-residue polypeptide: Cysteine--tRNA ligase (476 aa).

Cys36 serves as a coordination point for Zn(2+). The 'HIGH' region motif lies at 38–48 (PTVYDYAHIGN). The Zn(2+) site is built by Cys221, His246, and Glu250. The 'KMSKS' region motif lies at 278–282 (KMSKS). An ATP-binding site is contributed by Lys281.

Belongs to the class-I aminoacyl-tRNA synthetase family. In terms of assembly, monomer. The cofactor is Zn(2+).

It is found in the cytoplasm. It catalyses the reaction tRNA(Cys) + L-cysteine + ATP = L-cysteinyl-tRNA(Cys) + AMP + diphosphate. The chain is Cysteine--tRNA ligase from Chlamydia felis (strain Fe/C-56) (Chlamydophila felis).